Consider the following 188-residue polypeptide: Elongation factor P (188 aa).

At Lys-34 the chain carries N6-(3,6-diaminohexanoyl)-5-hydroxylysine.

It belongs to the elongation factor P family. May be beta-lysylated on the epsilon-amino group of Lys-34 by the combined action of EpmA and EpmB, and then hydroxylated on the C5 position of the same residue by EpmC (if this protein is present). Lysylation is critical for the stimulatory effect of EF-P on peptide-bond formation. The lysylation moiety may extend toward the peptidyltransferase center and stabilize the terminal 3-CCA end of the tRNA. Hydroxylation of the C5 position on Lys-34 may allow additional potential stabilizing hydrogen-bond interactions with the P-tRNA.

It localises to the cytoplasm. It participates in protein biosynthesis; polypeptide chain elongation. Its function is as follows. Involved in peptide bond synthesis. Alleviates ribosome stalling that occurs when 3 or more consecutive Pro residues or the sequence PPG is present in a protein, possibly by augmenting the peptidyl transferase activity of the ribosome. Modification of Lys-34 is required for alleviation. The protein is Elongation factor P of Vibrio parahaemolyticus serotype O3:K6 (strain RIMD 2210633).